The chain runs to 903 residues: Protein translocase subunit SecA (903 aa).

Residues Q87, 105–109, and D512 each bind ATP; that span reads GEGKT. The interval 853–903 is disordered; it reads KQQQLSHYEENALVTEDPNAPATAERKVGRNDPCPCGSGKKYKQCHGRLQS. Zn(2+) contacts are provided by C886, C888, C897, and H898. Positions 892-903 are enriched in basic residues; the sequence is KKYKQCHGRLQS.

It belongs to the SecA family. Monomer and homodimer. Part of the essential Sec protein translocation apparatus which comprises SecA, SecYEG and auxiliary proteins SecDF-YajC and YidC. Requires Zn(2+) as cofactor.

It is found in the cell inner membrane. The protein resides in the cytoplasm. The catalysed reaction is ATP + H2O + cellular proteinSide 1 = ADP + phosphate + cellular proteinSide 2.. Functionally, part of the Sec protein translocase complex. Interacts with the SecYEG preprotein conducting channel. Has a central role in coupling the hydrolysis of ATP to the transfer of proteins into and across the cell membrane, serving both as a receptor for the preprotein-SecB complex and as an ATP-driven molecular motor driving the stepwise translocation of polypeptide chains across the membrane. This chain is Protein translocase subunit SecA, found in Serratia proteamaculans (strain 568).